The primary structure comprises 393 residues: Golgi membrane protein 1 (393 aa).

Methionine 1 is subject to N-acetylmethionine. Residues methionine 1 to lysine 12 are Cytoplasmic-facing. Residues serine 13 to alanine 35 form a helical; Signal-anchor for type II membrane protein membrane-spanning segment. The Lumenal segment spans residues serine 36–alanine 393. Positions valine 40–glutamate 183 form a coiled coil. Residues asparagine 109 and asparagine 144 are each glycosylated (N-linked (GlcNAc...) asparagine). Disordered stretches follow at residues lysine 180–asparagine 247 and histidine 284–asparagine 352. Position 187 is a phosphoserine (serine 187). Polar residues-rich tracts occupy residues glutamate 192–leucine 201 and asparagine 227–asparagine 247. N-linked (GlcNAc...) asparagine glycosylation is present at asparagine 227. The segment covering arginine 294–glutamate 320 has biased composition (basic and acidic residues). The segment covering aspartate 330 to alanine 339 has biased composition (acidic residues).

This sequence belongs to the GOLM family. As to quaternary structure, interacts with DYM. Glycosylated. Post-translationally, phosphorylation sites are present in the extracellular medium.

Its subcellular location is the golgi apparatus. The protein resides in the cis-Golgi network membrane. Its function is as follows. Unknown. Cellular response protein to viral infection. The polypeptide is Golgi membrane protein 1 (Golm1) (Mus musculus (Mouse)).